The following is a 235-amino-acid chain: Small ribosomal subunit protein uS2c (235 aa).

It belongs to the universal ribosomal protein uS2 family.

It localises to the plastid. It is found in the chloroplast. The chain is Small ribosomal subunit protein uS2c (rps2) from Adiantum capillus-veneris (Maidenhair fern).